Here is a 225-residue protein sequence, read N- to C-terminus: Uridylate kinase (225 aa).

ATP is bound at residue 7-11 (KISGS). Gly44 contacts UMP. ATP-binding residues include Gly45 and Arg49. UMP-binding positions include Asp66 and 114–120 (FQPGQST). 2 residues coordinate ATP: Tyr147 and Glu150.

This sequence belongs to the UMP kinase family. As to quaternary structure, homohexamer.

The protein resides in the cytoplasm. It carries out the reaction UMP + ATP = UDP + ADP. The protein operates within pyrimidine metabolism; CTP biosynthesis via de novo pathway; UDP from UMP (UMPK route): step 1/1. With respect to regulation, inhibited by UTP. In terms of biological role, catalyzes the reversible phosphorylation of UMP to UDP. This Aeropyrum pernix (strain ATCC 700893 / DSM 11879 / JCM 9820 / NBRC 100138 / K1) protein is Uridylate kinase.